The chain runs to 75 residues: Small ribosomal subunit protein bS18 (75 aa).

The protein belongs to the bacterial ribosomal protein bS18 family. In terms of assembly, part of the 30S ribosomal subunit. Forms a tight heterodimer with protein bS6.

Functionally, binds as a heterodimer with protein bS6 to the central domain of the 16S rRNA, where it helps stabilize the platform of the 30S subunit. The polypeptide is Small ribosomal subunit protein bS18 (Shewanella denitrificans (strain OS217 / ATCC BAA-1090 / DSM 15013)).